The following is a 353-amino-acid chain: Mitogen-activated protein kinase mpkB (353 aa).

The 289-residue stretch at 21 to 309 folds into the Protein kinase domain; that stretch reads YEIQDVIGEG…VEEALRHPYL (289 aa). ATP is bound by residues 27 to 35 and lysine 50; that span reads IGEGAYGVV. Aspartate 145 serves as the catalytic Proton acceptor.

This sequence belongs to the protein kinase superfamily. Ser/Thr protein kinase family. MAP kinase subfamily. Mg(2+) serves as cofactor.

The protein resides in the nucleus. The catalysed reaction is L-seryl-[protein] + ATP = O-phospho-L-seryl-[protein] + ADP + H(+). It carries out the reaction L-threonyl-[protein] + ATP = O-phospho-L-threonyl-[protein] + ADP + H(+). With respect to regulation, activated by threonine and tyrosine phosphorylation. In terms of biological role, mitogen-activated protein kinase (MAPK) that plays a role in conidiation and regulation of secondary metabolite biosynthesis. Acts as a repressor of dihydroxynaphthalene (DHN)-melanin production. The protein is Mitogen-activated protein kinase mpkB of Aspergillus fumigatus (strain CBS 144.89 / FGSC A1163 / CEA10) (Neosartorya fumigata).